Consider the following 640-residue polypeptide: Replication protein A 70 kDa DNA-binding subunit A (640 aa).

A DNA-binding region (OB) is located at residues alanine 211–phenylalanine 293. The C4-type zinc finger occupies cysteine 503–cysteine 529.

Belongs to the replication factor A protein 1 family. As to quaternary structure, heterotrimer of RPA1, RPA2 and RPA3 (canonical replication protein A complex). Interacts with RPA2A. Expressed in roots, leaves, stalks and flower buds.

Its subcellular location is the nucleus. Its function is as follows. Component of the replication protein A complex (RPA) required for DNA recombination, repair and replication. The activity of RPA is mediated by single-stranded DNA binding and protein interactions. Plays an essential role at later stages of meiotic recombination events required for the formation of class I crossovers. Is essential for normal progression through meiosis in pollen mother cells. Is involved in repair of double-strand DNA breaks (DSBs) induced by genotoxic stresses, but does not seem to be required for the repair of meiotic DSBs. The protein is Replication protein A 70 kDa DNA-binding subunit A (RPA1A) of Arabidopsis thaliana (Mouse-ear cress).